The following is a 127-amino-acid chain: Small ribosomal subunit protein uS12m (127 aa).

Belongs to the universal ribosomal protein uS12 family.

Its subcellular location is the mitochondrion. The protein is Small ribosomal subunit protein uS12m (RPS12) of Acanthamoeba castellanii (Amoeba).